The primary structure comprises 756 residues: Receptor-like protein 3 (756 aa).

An N-terminal signal peptide occupies residues 1–50 (MTNEGRFKAKGFVRTSSTTRPIQALSFHMIGILLQCVLFISVLSIAVSEA). The tract at residues 51–88 (LCNSQDRESLLWFSGNVSSSVSPLNWNPSIDCCSWEGI) is N-cap. Residues 51-725 (LCNSQDRESL…ADTEDEEELK (675 aa)) lie on the Extracellular side of the membrane. A glycan (N-linked (GlcNAc...) asparagine) is linked at asparagine 66. 18 LRR repeats span residues 95–119 (DSHI…VLRL), 120–143 (HHLS…FLSA), 145–169 (DQLK…TFRN), 174–199 (CFPI…IFMQ), 201–225 (TFDL…MCKS), 226–250 (SPQL…LGRC), 252–274 (KLSV…IYNL), 275–298 (SELE…ITHL), 299–322 (TKLK…IGQL), 323–346 (SRLQ…LANC), 348–370 (NLVK…DFSR), 371–395 (FQSL…VHSC), 397–419 (SLSA…VLEL), 420–443 (ESLS…GILQ), 445–471 (CRNL…LISS), 474–498 (FPNL…LIKL), 499–521 (KSLA…WLGT), and 522–546 (FPHL…LFQL). N-linked (GlcNAc...) asparagine glycosylation is found at asparagine 126 and asparagine 169. Asparagine 208 carries an N-linked (GlcNAc...) asparagine glycan. N-linked (GlcNAc...) asparagine glycans are attached at residues asparagine 262 and asparagine 273. Residues asparagine 334 and asparagine 345 are each glycosylated (N-linked (GlcNAc...) asparagine). Asparagine 381 carries N-linked (GlcNAc...) asparagine glycosylation. Asparagine 434, asparagine 447, and asparagine 459 each carry an N-linked (GlcNAc...) asparagine glycan. The LRR 19; degenerate repeat unit spans residues 548–569 (ALMSQKAYDATERNYLKLPVFV). LRR repeat units follow at residues 570-593 (SPNN…IYIR), 608-631 (LKVL…ELSK), 632-656 (LTSL…LTSL), and 658-681 (YMSY…QFDT). Residue asparagine 573 is glycosylated (N-linked (GlcNAc...) asparagine). An N-linked (GlcNAc...) asparagine glycan is attached at asparagine 666. The tract at residues 699 to 725 (LTSCKASTKLPATTTNKADTEDEEELK) is C-cap/acidic domain. A helical membrane pass occupies residues 726–746 (FIFILGVATGFFVSYCFYWCF). Over 747 to 756 (FARLDAFISK) the chain is Cytoplasmic.

The protein belongs to the RLP family. Expressed at very low levels in the shoot apex.

The protein localises to the cell membrane. Functionally, involved in the perception of CLV3 and CLV3-like peptides, that act as extracellular signals regulating meristems maintenance. Contributes, with WAKL22/RFO1, to resistance to F.oxysporum (f.) matthioli in cv. Columbia relative to cv. Ty-0. The chain is Receptor-like protein 3 from Arabidopsis thaliana (Mouse-ear cress).